We begin with the raw amino-acid sequence, 382 residues long: L-lysine 4-hydroxylase (382 aa).

Fe cation contacts are provided by H182, E184, and H318.

It belongs to the clavaminate synthase family. Fe(2+) is required as a cofactor.

It catalyses the reaction L-lysine + 2-oxoglutarate + O2 = (4R)-4-hydroxy-L-lysine + succinate + CO2. In terms of biological role, alpha-ketoglutarate-dependent dioxygenase that in vitro catalyzes the regio- and stereoselective hydroxylation of L-lysine, leading to (4R)-4-hydroxy-L-lysine. Cannot use D-lysine or L-ornithine as substrate. The polypeptide is L-lysine 4-hydroxylase (Chitinophaga pinensis (strain ATCC 43595 / DSM 2588 / LMG 13176 / NBRC 15968 / NCIMB 11800 / UQM 2034)).